Here is a 569-residue protein sequence, read N- to C-terminus: Sulfite reductase [NADPH] hemoprotein beta-component (569 aa).

Residues C434, C440, C479, and C483 each contribute to the [4Fe-4S] cluster site. C483 lines the siroheme pocket.

The protein belongs to the nitrite and sulfite reductase 4Fe-4S domain family. Alpha(8)-beta(8). The alpha component is a flavoprotein, the beta component is a hemoprotein. Siroheme serves as cofactor. [4Fe-4S] cluster is required as a cofactor.

It catalyses the reaction hydrogen sulfide + 3 NADP(+) + 3 H2O = sulfite + 3 NADPH + 4 H(+). Its pathway is sulfur metabolism; hydrogen sulfide biosynthesis; hydrogen sulfide from sulfite (NADPH route): step 1/1. Functionally, component of the sulfite reductase complex that catalyzes the 6-electron reduction of sulfite to sulfide. This is one of several activities required for the biosynthesis of L-cysteine from sulfate. This is Sulfite reductase [NADPH] hemoprotein beta-component from Staphylococcus saprophyticus subsp. saprophyticus (strain ATCC 15305 / DSM 20229 / NCIMB 8711 / NCTC 7292 / S-41).